A 111-amino-acid chain; its full sequence is uncharacterized protein (111 aa).

The protein resides in the cytoplasm. The protein localises to the nucleus. This is an uncharacterized protein from Saccharomyces cerevisiae (strain ATCC 204508 / S288c) (Baker's yeast).